A 265-amino-acid polypeptide reads, in one-letter code: Indole-3-glycerol phosphate synthase (265 aa).

This sequence belongs to the TrpC family.

It carries out the reaction 1-(2-carboxyphenylamino)-1-deoxy-D-ribulose 5-phosphate + H(+) = (1S,2R)-1-C-(indol-3-yl)glycerol 3-phosphate + CO2 + H2O. It participates in amino-acid biosynthesis; L-tryptophan biosynthesis; L-tryptophan from chorismate: step 4/5. This Desulforamulus reducens (strain ATCC BAA-1160 / DSM 100696 / MI-1) (Desulfotomaculum reducens) protein is Indole-3-glycerol phosphate synthase.